A 270-amino-acid chain; its full sequence is Aliphatic sulfonates import ATP-binding protein SsuB 1 (270 aa).

The ABC transporter domain maps to 18 to 232; that stretch reads VQLRNVVRQF…DSGQAGFQLI (215 aa). 50-57 is an ATP binding site; that stretch reads GASGSGKT. Residues 247–270 form a disordered region; it reads PDTAPQASAPDSTFSELRRVASAR. Residues 251-261 show a composition bias toward polar residues; sequence PQASAPDSTFS.

Belongs to the ABC transporter superfamily. Aliphatic sulfonates importer (TC 3.A.1.17.2) family. As to quaternary structure, the complex is composed of two ATP-binding proteins (SsuB), two transmembrane proteins (SsuC) and a solute-binding protein (SsuA).

The protein resides in the cell inner membrane. The enzyme catalyses ATP + H2O + aliphatic sulfonate-[sulfonate-binding protein]Side 1 = ADP + phosphate + aliphatic sulfonateSide 2 + [sulfonate-binding protein]Side 1.. Its function is as follows. Part of the ABC transporter complex SsuABC involved in aliphatic sulfonates import. Responsible for energy coupling to the transport system. In Pseudomonas syringae pv. tomato (strain ATCC BAA-871 / DC3000), this protein is Aliphatic sulfonates import ATP-binding protein SsuB 1.